Consider the following 389-residue polypeptide: Innexin-6 (389 aa).

4 helical membrane passes run 36–56 (VVIL…GDPI), 111–131 (VFAL…AMIA), 190–210 (LFYT…FYIL), and 276–296 (LFIF…VNCF).

This sequence belongs to the pannexin family.

The protein resides in the cell membrane. It is found in the cell junction. Its subcellular location is the gap junction. Functionally, structural component of the gap junctions. The polypeptide is Innexin-6 (inx-6) (Caenorhabditis elegans).